A 739-amino-acid chain; its full sequence is Phosphoribosylformylglycinamidine synthase subunit PurL (739 aa).

Histidine 54 is an active-site residue. Residues tyrosine 57 and lysine 96 each coordinate ATP. Glutamate 98 is a binding site for Mg(2+). Residues 99–102 (SHNH) and arginine 121 each bind substrate. Catalysis depends on histidine 100, which acts as the Proton acceptor. Aspartate 122 provides a ligand contact to Mg(2+). Substrate is bound at residue glutamine 245. Residue aspartate 273 participates in Mg(2+) binding. 317 to 319 (ESQ) contacts substrate. ATP is bound by residues aspartate 500 and glycine 537. Residue asparagine 538 coordinates Mg(2+). Residue serine 540 coordinates substrate.

It belongs to the FGAMS family. Monomer. Part of the FGAM synthase complex composed of 1 PurL, 1 PurQ and 2 PurS subunits.

It is found in the cytoplasm. The catalysed reaction is N(2)-formyl-N(1)-(5-phospho-beta-D-ribosyl)glycinamide + L-glutamine + ATP + H2O = 2-formamido-N(1)-(5-O-phospho-beta-D-ribosyl)acetamidine + L-glutamate + ADP + phosphate + H(+). The protein operates within purine metabolism; IMP biosynthesis via de novo pathway; 5-amino-1-(5-phospho-D-ribosyl)imidazole from N(2)-formyl-N(1)-(5-phospho-D-ribosyl)glycinamide: step 1/2. In terms of biological role, part of the phosphoribosylformylglycinamidine synthase complex involved in the purines biosynthetic pathway. Catalyzes the ATP-dependent conversion of formylglycinamide ribonucleotide (FGAR) and glutamine to yield formylglycinamidine ribonucleotide (FGAM) and glutamate. The FGAM synthase complex is composed of three subunits. PurQ produces an ammonia molecule by converting glutamine to glutamate. PurL transfers the ammonia molecule to FGAR to form FGAM in an ATP-dependent manner. PurS interacts with PurQ and PurL and is thought to assist in the transfer of the ammonia molecule from PurQ to PurL. The sequence is that of Phosphoribosylformylglycinamidine synthase subunit PurL from Bacillus anthracis (strain A0248).